The primary structure comprises 420 residues: MTLLALGINHNTASVDLREKVAFSPDKLKEALQQLESHPEVTSSIIVSTCNRTEVYCDVTHSGPGVMIDWLAKFHRLSAEEILPSLYFHEEQAAARHLMRVACGLDSLVLGEPQILGQVKQSYYSSQEYDAIHGTLEKLFHKTFTVAKRVRTETDIGGNAVSVAYAACTLAKQIFESLSDTTVLLVGAGETIELVSRHLVEQGCNKLIVANRTKERAANLAEEFGAEVIGLPEIPEHLHRADIVISSTASPLPIVGKGMVEKAIKARRHQPMLFVDIAVPRDVEAEVGDLNDVYLYTVDDLHSIIEKNREQRKVAAIQAEAIISEESAAFMSWLRSLEAVDSIRQYRCFADDIKNDMLSRSLQAIANGVAPEKVLVELSNKLTNKLIHAPTRAMQQAAHNGEPEKLSVIRETLGLDSIKD.

Substrate contacts are provided by residues 49 to 52 (TCNR), Ser-107, 112 to 114 (EPQ), and Gln-118. The active-site Nucleophile is Cys-50. Position 187-192 (187-192 (GAGETI)) interacts with NADP(+).

Belongs to the glutamyl-tRNA reductase family. Homodimer.

It carries out the reaction (S)-4-amino-5-oxopentanoate + tRNA(Glu) + NADP(+) = L-glutamyl-tRNA(Glu) + NADPH + H(+). Its pathway is porphyrin-containing compound metabolism; protoporphyrin-IX biosynthesis; 5-aminolevulinate from L-glutamyl-tRNA(Glu): step 1/2. Catalyzes the NADPH-dependent reduction of glutamyl-tRNA(Glu) to glutamate 1-semialdehyde (GSA). This Photobacterium profundum (strain SS9) protein is Glutamyl-tRNA reductase.